Here is a 116-residue protein sequence, read N- to C-terminus: UPF0342 protein LBA1592 (116 aa).

The protein belongs to the UPF0342 family.

The protein is UPF0342 protein LBA1592 of Lactobacillus acidophilus (strain ATCC 700396 / NCK56 / N2 / NCFM).